Consider the following 424-residue polypeptide: Enolase (424 aa).

Glutamine 162 serves as a coordination point for (2R)-2-phosphoglycerate. The active-site Proton donor is the glutamate 204. Aspartate 241, glutamate 284, and aspartate 311 together coordinate Mg(2+). Lysine 336, arginine 365, serine 366, and lysine 387 together coordinate (2R)-2-phosphoglycerate. Lysine 336 (proton acceptor) is an active-site residue.

This sequence belongs to the enolase family. Mg(2+) serves as cofactor.

It localises to the cytoplasm. Its subcellular location is the secreted. The protein resides in the cell surface. The enzyme catalyses (2R)-2-phosphoglycerate = phosphoenolpyruvate + H2O. Its pathway is carbohydrate degradation; glycolysis; pyruvate from D-glyceraldehyde 3-phosphate: step 4/5. Functionally, catalyzes the reversible conversion of 2-phosphoglycerate (2-PG) into phosphoenolpyruvate (PEP). It is essential for the degradation of carbohydrates via glycolysis. The sequence is that of Enolase from Rhizobium meliloti (strain 1021) (Ensifer meliloti).